Reading from the N-terminus, the 166-residue chain is Large ribosomal subunit protein uL10 (166 aa).

The protein belongs to the universal ribosomal protein uL10 family. In terms of assembly, part of the ribosomal stalk of the 50S ribosomal subunit. The N-terminus interacts with L11 and the large rRNA to form the base of the stalk. The C-terminus forms an elongated spine to which L12 dimers bind in a sequential fashion forming a multimeric L10(L12)X complex.

Its function is as follows. Forms part of the ribosomal stalk, playing a central role in the interaction of the ribosome with GTP-bound translation factors. In Enterococcus faecalis (strain ATCC 700802 / V583), this protein is Large ribosomal subunit protein uL10.